The chain runs to 433 residues: Glutamate-1-semialdehyde 2,1-aminomutase (433 aa).

Lysine 273 carries the post-translational modification N6-(pyridoxal phosphate)lysine.

It belongs to the class-III pyridoxal-phosphate-dependent aminotransferase family. HemL subfamily. As to quaternary structure, homodimer. Pyridoxal 5'-phosphate serves as cofactor.

It is found in the cytoplasm. It catalyses the reaction (S)-4-amino-5-oxopentanoate = 5-aminolevulinate. The protein operates within porphyrin-containing compound metabolism; protoporphyrin-IX biosynthesis; 5-aminolevulinate from L-glutamyl-tRNA(Glu): step 2/2. It participates in porphyrin-containing compound metabolism; chlorophyll biosynthesis. This is Glutamate-1-semialdehyde 2,1-aminomutase (hemL) from Synechocystis sp. (strain ATCC 27184 / PCC 6803 / Kazusa).